The primary structure comprises 885 residues: Translation initiation factor IF-2 (885 aa).

The interval 1–295 (MTDNKDDKTI…EKFKRSQMQE (295 aa)) is disordered. Over residues 63-77 (PVAAAPAAARPAEQR) the composition is skewed to low complexity. The segment covering 78-94 (PMPPQPSGRPAPQPQPH) has biased composition (pro residues). The span at 130 to 183 (RDAEEAKRRAEEEVRRRREEEERIAREKEEAARRAAEEAARPAVEAEKVEEKVE) shows a compositional bias: basic and acidic residues. Residues 184 to 201 (AATPAVAETRPLSERPAP) are compositionally biased toward low complexity. One can recognise a tr-type G domain in the interval 383-550 (ARPPIVTIMG…AILLQSEILD (168 aa)). The segment at 392–399 (GHVDHGKT) is G1. 392 to 399 (GHVDHGKT) is a binding site for GTP. Residues 417–421 (GITQH) are G2. Positions 438–441 (DTPG) are G3. GTP-binding positions include 438 to 442 (DTPGH) and 492 to 495 (NKID). A G4 region spans residues 492 to 495 (NKID). The tract at residues 528 to 530 (SAK) is G5.

This sequence belongs to the TRAFAC class translation factor GTPase superfamily. Classic translation factor GTPase family. IF-2 subfamily.

Its subcellular location is the cytoplasm. In terms of biological role, one of the essential components for the initiation of protein synthesis. Protects formylmethionyl-tRNA from spontaneous hydrolysis and promotes its binding to the 30S ribosomal subunits. Also involved in the hydrolysis of GTP during the formation of the 70S ribosomal complex. In Sinorhizobium medicae (strain WSM419) (Ensifer medicae), this protein is Translation initiation factor IF-2.